A 186-amino-acid polypeptide reads, in one-letter code: Dehydrin Rab18 (186 aa).

Residues methionine 1–arginine 186 are disordered. Positions proline 30–glycine 85 are enriched in gly residues. The segment covering histidine 89 to serine 98 has biased composition (basic and acidic residues). The span at methionine 105–serine 116 shows a compositional bias: low complexity. Over residues lysine 133 to glutamine 144 the composition is skewed to basic and acidic residues. Gly residues predominate over residues glycine 152–glycine 164. Positions glycine 165–arginine 186 are enriched in basic and acidic residues.

Belongs to the plant dehydrin family.

This Arabidopsis thaliana (Mouse-ear cress) protein is Dehydrin Rab18 (RAB18).